Consider the following 404-residue polypeptide: Deoxyguanosinetriphosphate triphosphohydrolase-like protein (404 aa).

The segment at 1–33 (MSVGMAAPRAAFSCDPDRSRGRQFAEPPSSNRS) is disordered. The HD domain maps to 69–217 (RLTHSLEVAQ…AALADDIAYD (149 aa)).

Belongs to the dGTPase family. Type 2 subfamily.

The sequence is that of Deoxyguanosinetriphosphate triphosphohydrolase-like protein from Rhodopseudomonas palustris (strain HaA2).